The sequence spans 465 residues: 2-methylcitrate synthase, mitochondrial (465 aa).

The transit peptide at 1-29 (MAMTMRSTRHASKLAQTARLALTNSRRYS) directs the protein to the mitochondrion. Residues R74 and K192 each coordinate CoA. H269 contributes to the oxaloacetate binding site. L304 contributes to the CoA binding site. H305 is a catalytic residue. CoA is bound by residues V346, G348, and Y349. Oxaloacetate-binding residues include H351 and R360. H351 is an active-site residue. T400, K401, and N406 together coordinate CoA. The active site involves D408. Oxaloacetate contacts are provided by R434 and R454.

It belongs to the citrate synthase family. As to quaternary structure, homodimer.

Its subcellular location is the mitochondrion matrix. The catalysed reaction is propanoyl-CoA + oxaloacetate + H2O = (2S,3S)-2-methylcitrate + CoA + H(+). It catalyses the reaction oxaloacetate + acetyl-CoA + H2O = citrate + CoA + H(+). It functions in the pathway organic acid metabolism; propanoate degradation. In terms of biological role, component of the methylcitrate cycle that catalyzes the synthesis of (2S,3S)-2-methylcitrate from propionyl-CoA and oxaloacetate. Plays an important role in detoxification of propionyl-CoA, an inhibitor of both primary and secondary metabolism. Also has citrate synthase activity using as substrates acetyl-CoA and oxaloacetate. Plays a key role in the estabishment of invasive pulmonary aspergillosis. This Aspergillus fumigatus (strain CBS 144.89 / FGSC A1163 / CEA10) (Neosartorya fumigata) protein is 2-methylcitrate synthase, mitochondrial.